The following is a 37-amino-acid chain: MKVRASVRRICEKCRVIRRRGRVMVICTNPKHKQRQG.

It belongs to the bacterial ribosomal protein bL36 family.

The sequence is that of Large ribosomal subunit protein bL36 from Thermosynechococcus vestitus (strain NIES-2133 / IAM M-273 / BP-1).